The sequence spans 105 residues: MVVRYPMAVGLNKGHKVTKNVSKPKHSRRRGRLTKHAKFARDLIREVCGFAPYERRAMELLKVSKDKRALKFIKKRVGTHIRAKRKREELSNTLAAMRKAAAKKE.

Belongs to the eukaryotic ribosomal protein eL36 family. As to quaternary structure, component of the large ribosomal subunit.

The protein localises to the cytoplasm. It is found in the cytosol. Functionally, component of the large ribosomal subunit. The ribosome is a large ribonucleoprotein complex responsible for the synthesis of proteins in the cell. This Danio rerio (Zebrafish) protein is Large ribosomal subunit protein eL36 (rpl36).